Here is a 359-residue protein sequence, read N- to C-terminus: 1-deoxy-D-xylulose 5-phosphate reductoisomerase (359 aa).

NADPH is bound by residues threonine 7, glycine 8, serine 9, isoleucine 10, alanine 31, asparagine 33, and asparagine 111. Lysine 112 serves as a coordination point for 1-deoxy-D-xylulose 5-phosphate. Glutamate 113 contacts NADPH. A Mn(2+)-binding site is contributed by aspartate 131. 4 residues coordinate 1-deoxy-D-xylulose 5-phosphate: serine 132, glutamate 133, serine 155, and histidine 178. Glutamate 133 provides a ligand contact to Mn(2+). Glycine 184 is an NADPH binding site. 1-deoxy-D-xylulose 5-phosphate is bound by residues serine 191, asparagine 196, lysine 197, and glutamate 200. Residue glutamate 200 participates in Mn(2+) binding.

It belongs to the DXR family. Mg(2+) is required as a cofactor. Mn(2+) serves as cofactor.

The enzyme catalyses 2-C-methyl-D-erythritol 4-phosphate + NADP(+) = 1-deoxy-D-xylulose 5-phosphate + NADPH + H(+). It functions in the pathway isoprenoid biosynthesis; isopentenyl diphosphate biosynthesis via DXP pathway; isopentenyl diphosphate from 1-deoxy-D-xylulose 5-phosphate: step 1/6. Its function is as follows. Catalyzes the NADPH-dependent rearrangement and reduction of 1-deoxy-D-xylulose-5-phosphate (DXP) to 2-C-methyl-D-erythritol 4-phosphate (MEP). The chain is 1-deoxy-D-xylulose 5-phosphate reductoisomerase from Campylobacter hominis (strain ATCC BAA-381 / DSM 21671 / CCUG 45161 / LMG 19568 / NCTC 13146 / CH001A).